We begin with the raw amino-acid sequence, 411 residues long: Tyrosine--tRNA ligase (411 aa).

L-tyrosine is bound at residue Tyr-34. Positions 39–48 (CTATSLHIGS) match the 'HIGH' region motif. Residues Tyr-171 and Gln-175 each coordinate L-tyrosine. The 'KMSKS' region motif lies at 231–235 (KMGKT). Lys-234 contacts ATP. An S4 RNA-binding domain is found at 345-411 (ISAYELFYEA…GKKRHILVRV (67 aa)).

Belongs to the class-I aminoacyl-tRNA synthetase family. TyrS type 1 subfamily. Homodimer.

The protein localises to the cytoplasm. The enzyme catalyses tRNA(Tyr) + L-tyrosine + ATP = L-tyrosyl-tRNA(Tyr) + AMP + diphosphate + H(+). Functionally, catalyzes the attachment of tyrosine to tRNA(Tyr) in a two-step reaction: tyrosine is first activated by ATP to form Tyr-AMP and then transferred to the acceptor end of tRNA(Tyr). The chain is Tyrosine--tRNA ligase from Rickettsia rickettsii (strain Sheila Smith).